Here is a 616-residue protein sequence, read N- to C-terminus: Chaperone protein HscA (616 aa).

This sequence belongs to the heat shock protein 70 family.

In terms of biological role, chaperone involved in the maturation of iron-sulfur cluster-containing proteins. Has a low intrinsic ATPase activity which is markedly stimulated by HscB. Involved in the maturation of IscU. This is Chaperone protein HscA from Citrobacter koseri (strain ATCC BAA-895 / CDC 4225-83 / SGSC4696).